Reading from the N-terminus, the 186-residue chain is Small ribosomal subunit protein uS4 (186 aa).

The 65-residue stretch at 106-170 (RRLQTIVYRK…SPLKDEDHPI (65 aa)) folds into the S4 RNA-binding domain. Residues 151–186 (EEEEVDYSPYSPLKDEDHPIRCEARGESPEETAAEE) form a disordered region. Residues 163 to 178 (LKDEDHPIRCEARGES) show a composition bias toward basic and acidic residues.

The protein belongs to the universal ribosomal protein uS4 family. As to quaternary structure, part of the 30S ribosomal subunit. Contacts protein S5. The interaction surface between S4 and S5 is involved in control of translational fidelity.

Functionally, one of the primary rRNA binding proteins, it binds directly to 16S rRNA where it nucleates assembly of the body of the 30S subunit. Its function is as follows. With S5 and S12 plays an important role in translational accuracy. In Methanopyrus kandleri (strain AV19 / DSM 6324 / JCM 9639 / NBRC 100938), this protein is Small ribosomal subunit protein uS4.